Here is a 607-residue protein sequence, read N- to C-terminus: Translation initiation factor IF-2 (607 aa).

The interval 54 to 93 is disordered; it reads SAPQAQDSTPVAETPAAAQPAAPQAASSQPAAAQAAQAVA. Low complexity predominate over residues 62 to 93; the sequence is TPVAETPAAAQPAAPQAASSQPAAAQAAQAVA. The 174-residue stretch at 108-281 folds into the tr-type G domain; it reads HRAPVVTIMG…ELEDLRADPK (174 aa). Positions 117–124 are G1; the sequence is GHVDHGKT. 117–124 contributes to the GTP binding site; the sequence is GHVDHGKT. The interval 142 to 146 is G2; that stretch reads GITQH. The tract at residues 163–166 is G3; that stretch reads DTPG. GTP is bound by residues 163 to 167 and 217 to 220; these read DTPGH and NKVD. Residues 217–220 form a G4 region; that stretch reads NKVD. The interval 253–255 is G5; it reads SAK.

The protein belongs to the TRAFAC class translation factor GTPase superfamily. Classic translation factor GTPase family. IF-2 subfamily.

It localises to the cytoplasm. Functionally, one of the essential components for the initiation of protein synthesis. Protects formylmethionyl-tRNA from spontaneous hydrolysis and promotes its binding to the 30S ribosomal subunits. Also involved in the hydrolysis of GTP during the formation of the 70S ribosomal complex. This is Translation initiation factor IF-2 from Deinococcus deserti (strain DSM 17065 / CIP 109153 / LMG 22923 / VCD115).